A 277-amino-acid polypeptide reads, in one-letter code: MAALVEFISDRVLSSCKSACKEDPKLRSYISALRERMDKLMEIKRSPFERESRDTDFGGNNKYAGTLEKLNKVKALGDLFGDEFTTQYKAIYDEHQMLLNKSHHMQLEHEKKHKNDKKSKRLGYIFFAAALLSVLALWIYLGAVSLVVAAKVVIEVATPSIAPLWKWVTEILEDSESEIAYKKLTDLFRSMDKNANLNIEFAKTFKSLVETLLTRIKPILETVDYAVEQREEETVKLVSKKSLRILKVLLTKSRKLVQMWLGVAKWSLREELMFWNT.

The next 2 helical transmembrane spans lie at Y124–V144 and S145–W165.

It belongs to the UPF0496 family.

It localises to the membrane. This chain is UPF0496 protein At3g48650, found in Arabidopsis thaliana (Mouse-ear cress).